A 349-amino-acid chain; its full sequence is Probable FBD-associated F-box protein At5g38565 (349 aa).

Positions 1 to 47 (MDIFNGLPDDVLVKILSFVPTKVAVSTSILSKRWEFLWMWLPRLDFG) constitute an F-box domain. The region spanning 263 to 311 (CWNQPISVPECLLESLQIFNLSHYFGKQQDLDFVVYILKNACHLKTATI) is the FBD domain.

In Arabidopsis thaliana (Mouse-ear cress), this protein is Probable FBD-associated F-box protein At5g38565.